The following is a 142-amino-acid chain: Complexin (142 aa).

Disordered stretches follow at residues 13–70 and 83–105; these read QLSA…MRQD and IVEA…PEEL. A coiled-coil region spans residues 29–138; the sequence is GDDKEKAEEE…NELKTQIEGK (110 aa). The span at 31-70 shows a compositional bias: basic and acidic residues; it reads DKEKAEEEERERQEAIKEAEDRRKEKHRKMEEEREKMRQD. At cysteine 139 the chain carries Cysteine methyl ester. Cysteine 139 is lipidated: S-farnesyl cysteine. A propeptide spans 140-142 (removed in mature form); it reads VMQ.

Belongs to the complexin/synaphin family. Binds to the SNARE core complex containing Snap25, synaptobrevin and Syx1A.

The protein resides in the membrane. Functionally, positively regulates a late step in synaptic vesicle exocytosis. The sequence is that of Complexin (cpx) from Drosophila melanogaster (Fruit fly).